The sequence spans 351 residues: Biotin synthase (351 aa).

A Radical SAM core domain is found at Asn42–Arg269. The [4Fe-4S] cluster site is built by Cys57, Cys61, and Cys64. Cys101, Cys132, Cys192, and Arg264 together coordinate [2Fe-2S] cluster.

Belongs to the radical SAM superfamily. Biotin synthase family. Homodimer. [4Fe-4S] cluster is required as a cofactor. Requires [2Fe-2S] cluster as cofactor.

It carries out the reaction (4R,5S)-dethiobiotin + (sulfur carrier)-SH + 2 reduced [2Fe-2S]-[ferredoxin] + 2 S-adenosyl-L-methionine = (sulfur carrier)-H + biotin + 2 5'-deoxyadenosine + 2 L-methionine + 2 oxidized [2Fe-2S]-[ferredoxin]. Its pathway is cofactor biosynthesis; biotin biosynthesis; biotin from 7,8-diaminononanoate: step 2/2. Catalyzes the conversion of dethiobiotin (DTB) to biotin by the insertion of a sulfur atom into dethiobiotin via a radical-based mechanism. This chain is Biotin synthase, found in Psychromonas ingrahamii (strain DSM 17664 / CCUG 51855 / 37).